The sequence spans 139 residues: Metallothiol transferase FosB (139 aa).

A VOC domain is found at 4-119; it reads GINHITYSVS…DGHKLELHTG (116 aa). His7, His66, and Glu115 together coordinate Mg(2+). Glu115 (proton donor/acceptor) is an active-site residue.

This sequence belongs to the fosfomycin resistance protein family. FosB subfamily. In terms of assembly, homodimer. Mg(2+) serves as cofactor.

It is found in the cytoplasm. Metallothiol transferase which confers resistance to fosfomycin by catalyzing the addition of a thiol cofactor to fosfomycin. L-cysteine is probably the physiological thiol donor. The protein is Metallothiol transferase FosB of Staphylococcus haemolyticus.